A 199-amino-acid polypeptide reads, in one-letter code: RNA-binding protein, mRNA-processing factor 2a (199 aa).

In terms of domain architecture, RRM spans 20–97 (RTLFVSGLPV…QTLRLEFAKA (78 aa)).

Interacts with Bucky ball (BUC); to mediate Balbiani body formation and oocyte polarity during early oogenesis.

It is found in the cytoplasm. Its subcellular location is the nucleus. The protein localises to the stress granule. Functionally, RNA-binding protein involved in the regulation of smooth muscle cell differentiation and proliferation in the gastrointestinal system. RNA-binding protein localized in Balbiani body (electron-dense aggregates in the oocyte) and germ plasm during oogenesis, and may be required to maintain germ plasm mRNA translational repression. Translational regulator during topographic map formation in the visual system. Establishes oocyte polarity through interaction with Bucky ball (BUC). Acts as a pre-mRNA alternative splicing regulator. Mediates ACTN1 and FLNB alternative splicing. Likely binds to mRNA tandem CAC trinucleotide or CA dinucleotide motifs. This Danio rerio (Zebrafish) protein is RNA-binding protein, mRNA-processing factor 2a.